The sequence spans 38 residues: Anthranilate phosphoribosyltransferase (38 aa).

The protein belongs to the anthranilate phosphoribosyltransferase family. In terms of assembly, homodimer.

It carries out the reaction N-(5-phospho-beta-D-ribosyl)anthranilate + diphosphate = 5-phospho-alpha-D-ribose 1-diphosphate + anthranilate. It functions in the pathway amino-acid biosynthesis; L-tryptophan biosynthesis; L-tryptophan from chorismate: step 2/5. In terms of biological role, catalyzes the transfer of the phosphoribosyl group of 5-phosphorylribose-1-pyrophosphate (PRPP) to anthranilate to yield N-(5'-phosphoribosyl)-anthranilate (PRA). This is Anthranilate phosphoribosyltransferase (trpD) from Serratia marcescens.